We begin with the raw amino-acid sequence, 645 residues long: Chaperone protein DnaK (645 aa).

Thr201 is subject to Phosphothreonine; by autocatalysis. Residues 606–629 (NTNNATAGDNNTTDTGSSSNSDGS) show a composition bias toward low complexity. The segment at 606–645 (NTNNATAGDNNTTDTGSSSNSDGSKVVDSDYQEIDKKDGK) is disordered. Positions 630–645 (KVVDSDYQEIDKKDGK) are enriched in basic and acidic residues.

Belongs to the heat shock protein 70 family.

Acts as a chaperone. This is Chaperone protein DnaK from Ehrlichia ruminantium (strain Welgevonden).